The primary structure comprises 394 residues: MVHLTPALLLASAAFAAAAPASQIFERQCSVAGNYPTAAVSKLPDPFTTAAGQKITTKADFDCRKAEISKILQQYELGTYPGKPDKVEGSLSGNTLTVRITVGSQTVSFSASIKKPSSGSGPFPAIIGIGGISIPIPSTVATITFPNDDFAQQSGTSSRGRGKFYTLFGSSHSAGALIAWAWGVDRLVDALEQVQSTSGIDPKRLGVTGCSRNGKGAFVAGALVDRIALTIPQESGAGGAACWRISDSEKSAGKNIQTASQIVTENVWFSPAFNAYTRQTTNIPADHHMLAALTVPRGLIAFENDIDWLGPVSTTACMQAGRLIYKAYGVSNHMGFSLVGGHGHCQFPSSQQSELTSYINYFLLKAGTAPGAVERSSAKVDLKSWAPWDVPALS.

An N-terminal signal peptide occupies residues 1 to 18; it reads MVHLTPALLLASAAFAAA. Cystine bridges form between Cys29-Cys63, Cys210-Cys345, and Cys242-Cys317. Residues 209–214 carry the GXSYXG catalytic site motif motif; sequence GCSRNG. Ser211 serves as the catalytic Nucleophile. Residues Lys215, Gln257, Glu265, and Trp308 each coordinate substrate. Residue His344 is the Proton donor/acceptor of the active site.

The protein belongs to the carbohydrate esterase 15 (CE15) family.

The protein localises to the secreted. The catalysed reaction is a 4-O-methyl-alpha-D-glucuronosyl ester derivative + H2O = 4-O-methyl-alpha-D-glucuronate derivative + an alcohol + H(+). Its function is as follows. Glucuronoyl esterase which may play a significant role in biomass degradation, as it is considered to disconnect hemicellulose from lignin through the hydrolysis of the ester bond between 4-O-methyl-D-glucuronic acid residues of glucuronoxylans and aromatic alcohols of lignin. The chain is 4-O-methyl-glucuronoyl methylesterase from Neurospora crassa (strain ATCC 24698 / 74-OR23-1A / CBS 708.71 / DSM 1257 / FGSC 987).